The primary structure comprises 131 residues: Small ribosomal subunit protein uS11 (131 aa).

Belongs to the universal ribosomal protein uS11 family. As to quaternary structure, part of the 30S ribosomal subunit. Interacts with proteins S7 and S18. Binds to IF-3.

Its function is as follows. Located on the platform of the 30S subunit, it bridges several disparate RNA helices of the 16S rRNA. Forms part of the Shine-Dalgarno cleft in the 70S ribosome. This is Small ribosomal subunit protein uS11 from Helicobacter pylori (strain Shi470).